Reading from the N-terminus, the 386-residue chain is Aspartate carbamoyltransferase 1, chloroplastic (386 aa).

The N-terminal 39 residues, 1-39 (MTVASMLSSNSMNVGVSNPKMSSKTSACCLLNRPWPSSC), are a transit peptide targeting the chloroplast. Positions 132 and 133 each coordinate carbamoyl phosphate. Arginine 132 and threonine 133 together coordinate UMP. Residue lysine 162 participates in L-aspartate binding. 3 residues coordinate carbamoyl phosphate: arginine 183, histidine 211, and glutamine 214. UMP contacts are provided by arginine 183 and histidine 211. The UMP site is built by arginine 244 and arginine 306. L-aspartate-binding residues include arginine 244 and arginine 306. Carbamoyl phosphate is bound by residues leucine 346 and proline 347.

It belongs to the aspartate/ornithine carbamoyltransferase superfamily. ATCase family. As to quaternary structure, homotrimer.

It localises to the plastid. The protein resides in the chloroplast. The catalysed reaction is carbamoyl phosphate + L-aspartate = N-carbamoyl-L-aspartate + phosphate + H(+). It participates in pyrimidine metabolism; UMP biosynthesis via de novo pathway; (S)-dihydroorotate from bicarbonate: step 2/3. With respect to regulation, feedback inhibited by UMP. Functionally, catalyzes the condensation of carbamoyl phosphate and aspartate to form carbamoyl aspartate and inorganic phosphate, the committed step in the de novo pyrimidine nucleotide biosynthesis pathway. This Pisum sativum (Garden pea) protein is Aspartate carbamoyltransferase 1, chloroplastic (PYRB1).